A 1125-amino-acid polypeptide reads, in one-letter code: Speract receptor (1125 aa).

Residues 1–21 (MAHARHLFLFMVAFTITMVIA) form the signal peptide. Topologically, residues 22–510 (RLDFNPTIIN…GELCTNWALY (489 aa)) are extracellular. 2 N-linked (GlcNAc...) asparagine glycosylation sites follow: asparagine 185 and asparagine 409. Residues 511–531 (LGASIPTFLIIFGGLIGFFIY) traverse the membrane as a helical segment. Topologically, residues 532 to 1125 (RKRAYEAALD…AANRVIPDDV (594 aa)) are cytoplasmic. Residues 571-839 (MSAISVISNA…PNIMAVRTML (269 aa)) form the Protein kinase domain. One can recognise a Guanylate cyclase domain in the interval 914-1044 (SIFFSDIVGF…DTVNTASRME (131 aa)).

Belongs to the adenylyl cyclase class-4/guanylyl cyclase family.

It localises to the membrane. The catalysed reaction is GTP = 3',5'-cyclic GMP + diphosphate. Implicated as a cell-surface receptor on spermatozoa for 'speract' a chemotactic peptide, and on various other cells as a receptor for atrial natriuretic peptide. In Strongylocentrotus purpuratus (Purple sea urchin), this protein is Speract receptor.